We begin with the raw amino-acid sequence, 137 residues long: Peptide methionine sulfoxide reductase MsrB (137 aa).

Positions valine 7–glutamate 129 constitute a MsrB domain. Zn(2+)-binding residues include cysteine 46, cysteine 49, cysteine 95, and cysteine 98. The active-site Nucleophile is the cysteine 118.

Belongs to the MsrB Met sulfoxide reductase family. Zn(2+) serves as cofactor.

The catalysed reaction is L-methionyl-[protein] + [thioredoxin]-disulfide + H2O = L-methionyl-(R)-S-oxide-[protein] + [thioredoxin]-dithiol. This is Peptide methionine sulfoxide reductase MsrB from Escherichia fergusonii (strain ATCC 35469 / DSM 13698 / CCUG 18766 / IAM 14443 / JCM 21226 / LMG 7866 / NBRC 102419 / NCTC 12128 / CDC 0568-73).